We begin with the raw amino-acid sequence, 575 residues long: MIKRTLMLFLLLCSPLLTPAAANALFEQPGQNPYLPVDQAFMFDFQQKGDKLTLDWQIKPGYYLYHKQLHIEPQQATLGKITLPQGTAHRDEFFGETEVYFQQLIVNVPVTKANNNSNIVVTYQGCAAAGYCYPPETRLVPLSAVIPSKTTDAISAEPVHKTPESASNDQQHLPFSPLWAILIGIGIAFTPCVLPMYPLISSIILGSQRPKSLKQIFWLALSYVQGMAVTYTLLGLIVAAAGLQFQAALQHPYVLIGLSVLFILLALSMFGLYSLQLPSAVQTRLVNWSNQQKNGSLFGVFAMGALAGLICSPCTTAPLSAILLYIAQSGNTVAGGLTLYLYALGMGLPLIAVTLFGHKLLPRSGPWMQYVKEAFGFIILALPVFLLERVIGDAWGIRLWSLLAVSFLGWGFVLTIRSQNGWVRVIQLILLILMLIATRPLQDWFWGTTVTQQSQHSLNFRQINNWQELEQIMTQNSHKTVMLDFYADWCTACKEFEKYTFSDPQVQSQLGDTLLLQANVTNNSPQQKQLLEKLSVRGLPTILFFDSQGKEIPDSRVNGFMDATRFNEHLQHLPK.

The first 24 residues, 1–24, serve as a signal peptide directing secretion; it reads MIKRTLMLFLLLCSPLLTPAAANA. 2 disulfide bridges follow: cysteine 126–cysteine 132 and cysteine 192–cysteine 314. The next 8 membrane-spanning stretches (helical) occupy residues 180-200, 216-236, 253-273, 297-317, 336-356, 367-387, 394-414, and 425-445; these read AILI…YPLI, IFWL…LLGL, YVLI…FGLY, LFGV…CTTA, GLTL…VTLF, WMQY…VFLL, AWGI…GFVL, and VIQL…QDWF. The Thioredoxin domain maps to 444-575; it reads WFWGTTVTQQ…FNEHLQHLPK (132 aa). Cysteines 490 and 493 form a disulfide.

It belongs to the thioredoxin family. DsbD subfamily.

The protein localises to the cell inner membrane. It catalyses the reaction [protein]-dithiol + NAD(+) = [protein]-disulfide + NADH + H(+). The catalysed reaction is [protein]-dithiol + NADP(+) = [protein]-disulfide + NADPH + H(+). Its function is as follows. Required to facilitate the formation of correct disulfide bonds in some periplasmic proteins and for the assembly of the periplasmic c-type cytochromes. Acts by transferring electrons from cytoplasmic thioredoxin to the periplasm. This transfer involves a cascade of disulfide bond formation and reduction steps. This Photorhabdus laumondii subsp. laumondii (strain DSM 15139 / CIP 105565 / TT01) (Photorhabdus luminescens subsp. laumondii) protein is Thiol:disulfide interchange protein DsbD.